We begin with the raw amino-acid sequence, 459 residues long: MQKIETFWHFCLKHFRQELNGQQFNTWIKPLKLEVCPDEKNTLILIAPNRFVLQWIKDNFVTRIDEMAQDHFNERISFRLELREPAESEAQTVRTSAQKNREDKKPAAEKTQGVTSRKTNPSQLNASFTFDAFVTGKANQLARAGAIQVAERPGIAYNPLFIYGGVGLGKTHLMQAIGNYVLELDAGAKIRYVHAEKYVSDVVSAYQHKSFDKFKLYYHSLDLLLVDDVQFFSGKNRTQEEFFYAFNALIEAHKQVIITSDCYPKEISGLEERLVSRFGWGLTVAIEPPELEMRVAILLKKALAEKIELDENTAFFIAKYIRSNVRELEGALKRVLAFSRFTGHSISLDLAKEALKDLLAIQNRQISIENIQKTVADYYKIKVADMYSKKRVRTIVRPRQVAMAIAKELTQLSLPDIGEAFGGRDHTTVLHAHRKIIELRTSDPGINRDFNALMHILRG.

Residues 1–74 form a domain I, interacts with DnaA modulators region; sequence MQKIETFWHF…DEMAQDHFNE (74 aa). Residues 74-122 are domain II; that stretch reads ERISFRLELREPAESEAQTVRTSAQKNREDKKPAAEKTQGVTSRKTNPS. The tract at residues 87–122 is disordered; that stretch reads ESEAQTVRTSAQKNREDKKPAAEKTQGVTSRKTNPS. Positions 89-98 are enriched in polar residues; the sequence is EAQTVRTSAQ. Residues 99 to 108 show a composition bias toward basic and acidic residues; that stretch reads KNREDKKPAA. The span at 112–122 shows a compositional bias: polar residues; that stretch reads QGVTSRKTNPS. A domain III, AAA+ region region spans residues 123 to 339; sequence QLNASFTFDA…GALKRVLAFS (217 aa). Residues Gly-167, Gly-169, Lys-170, and Thr-171 each contribute to the ATP site. Residues 340 to 459 form a domain IV, binds dsDNA region; the sequence is RFTGHSISLD…FNALMHILRG (120 aa).

Belongs to the DnaA family. In terms of assembly, oligomerizes as a right-handed, spiral filament on DNA at oriC.

The protein resides in the cytoplasm. Its function is as follows. Plays an essential role in the initiation and regulation of chromosomal replication. ATP-DnaA binds to the origin of replication (oriC) to initiate formation of the DNA replication initiation complex once per cell cycle. Binds the DnaA box (a 9 base pair repeat at the origin) and separates the double-stranded (ds)DNA. Forms a right-handed helical filament on oriC DNA; dsDNA binds to the exterior of the filament while single-stranded (ss)DNA is stabiized in the filament's interior. The ATP-DnaA-oriC complex binds and stabilizes one strand of the AT-rich DNA unwinding element (DUE), permitting loading of DNA polymerase. After initiation quickly degrades to an ADP-DnaA complex that is not apt for DNA replication. Binds acidic phospholipids. The polypeptide is Chromosomal replication initiator protein DnaA (Nitrosomonas europaea (strain ATCC 19718 / CIP 103999 / KCTC 2705 / NBRC 14298)).